The primary structure comprises 131 residues: Glycine cleavage system H protein (131 aa).

Positions 24–106 (IATLGISAFA…HGEGWLLKVR (83 aa)) constitute a Lipoyl-binding domain. Lys65 carries the post-translational modification N6-lipoyllysine.

Belongs to the GcvH family. The glycine cleavage system is composed of four proteins: P, T, L and H. (R)-lipoate serves as cofactor.

Functionally, the glycine cleavage system catalyzes the degradation of glycine. The H protein shuttles the methylamine group of glycine from the P protein to the T protein. This chain is Glycine cleavage system H protein, found in Microcystis aeruginosa (strain NIES-843 / IAM M-2473).